A 371-amino-acid polypeptide reads, in one-letter code: Leu/Ile/Val-binding protein homolog 2 (371 aa).

An N-terminal signal peptide occupies residues 1–23 (MKKSLFCGVCLCALVAMGGTSFA).

Belongs to the leucine-binding protein family.

Its function is as follows. Component of an amino-acid transport system. The sequence is that of Leu/Ile/Val-binding protein homolog 2 from Brucella abortus (strain 2308).